The chain runs to 816 residues: H(+)/Cl(-) exchange transporter 5 (816 aa).

Topologically, residues 1–124 (MAMWQGAMDN…WALIHSVSDA (124 aa)) are cytoplasmic. The next 2 membrane-spanning stretches (helical) occupy residues 125-162 (FSGW…ICTG) and 208-231 (VNYF…VKAF). A Selectivity filter part_1 motif is present at residues 237-241 (GSGIP). Residue Ser238 coordinates chloride. Positions 240 to 247 (IPEIKTIL) form an intramembrane region, helical. Helical transmembrane passes span 256–275 (LGKW…VSSG) and 281–300 (EGPL…HCFN). Positions 279–283 (GKEGP) match the Selectivity filter part_2 motif. 2 consecutive intramembrane regions (helical) follow at residues 312 to 324 (VLSA…VSVA) and 328 to 336 (PIGGVLFSL). 5 helical membrane-spanning segments follow: residues 348–366 (LWRS…RSIN), 389–414 (LVPF…IAWC), 422–442 (LGKY…ILAF), 498–518 (MWQL…TFGM), and 523–542 (GLFI…LGVG). The Selectivity filter part_3 signature appears at 523–527 (GLFIP). A chloride-binding site is contributed by Phe525. An intramembrane region (helical) is located at residues 570-584 (GLYAMVGAAACLGGV). The note=Loop between two helices intramembrane region spans 585–587 (TRM). Positions 588–599 (TVSLVVIMFELT) form an intramembrane region, helical. Residues 600–604 (GGLEY) constitute an intramembrane region (note=Loop between two helices). Residues 605-622 (IVPLMAAAMTSKWVADAL) traverse the membrane as a helical segment. Residues 623–816 (GREGIYDAHI…NQDPESILFN (194 aa)) lie on the Cytoplasmic side of the membrane. Tyr628 is a binding site for chloride. CBS domains lie at 656–720 (MKPR…ARKK) and 752–811 (ILDL…QDPE). ATP-binding positions include Thr666, 687–689 (YSG), and 794–797 (TKKD).

It belongs to the chloride channel (TC 2.A.49) family. ClC-5/CLCN5 subfamily. In terms of assembly, interacts with NEDD4 and NEDD4L. Ubiquitinated by NEDD4L in the presence of albumin; which promotes endocytosis and proteasomal degradation. Kidney specific.

It localises to the golgi apparatus membrane. The protein localises to the endosome membrane. It is found in the cell membrane. It carries out the reaction 2 chloride(in) + H(+)(out) = 2 chloride(out) + H(+)(in). Proton-coupled chloride transporter. Functions as antiport system and exchanges chloride ions against protons. Important for normal acidification of the endosome lumen. May play an important role in renal tubular function. The CLC channel family contains both chloride channels and proton-coupled anion transporters that exchange chloride or another anion for protons. The absence of conserved gating glutamate residues is typical for family members that function as channels. This chain is H(+)/Cl(-) exchange transporter 5 (Clcn5), found in Rattus norvegicus (Rat).